A 1078-amino-acid polypeptide reads, in one-letter code: mRNA 3'-end-processing protein rna14 (1078 aa).

Disordered stretches follow at residues 15 to 209 (AMNA…DTPA) and 222 to 251 (QSEN…HDRV). Residues 42-55 (KTLQDQYSASILDS) show a composition bias toward polar residues. Residues 58–68 (SEIAPSSASPS) show a composition bias toward low complexity. The segment covering 82–115 (DPSQPADSAYPSQTPSRADSQASVSAPASGTSVP) has biased composition (polar residues). Residues 126-139 (VEDEDEDDAGDADY) are compositionally biased toward acidic residues. 2 stretches are compositionally biased toward polar residues: residues 151–170 (NTIS…NEDT) and 190–206 (FPNS…SKSD). HAT repeat units lie at residues 280–312 (NRID…MESE), 314–345 (NELY…YVRR), 356–391 (QSRR…FIRS), 405–438 (QKMD…FEMG), 475–508 (TTLP…WEKG), and 520–552 (AFKA…FCFL). Disordered regions lie at residues 632–663 (ETFA…ESMK) and 851–950 (PTVV…QGSP). Polar residues predominate over residues 879–894 (GTPSSRYPDASVTNSP). Residues 896 to 907 (RPLEDFDDEMNR) are compositionally biased toward basic and acidic residues. Residues 931-949 (RTQQVISNQTGSQFRSQGS) are compositionally biased toward polar residues.

Its subcellular location is the nucleus. The protein localises to the cytoplasm. Component of the cleavage factor IA (CFIA) complex, which is involved in the endonucleolytic cleavage during polyadenylation-dependent pre-mRNA 3'-end formation. In Aspergillus oryzae (strain ATCC 42149 / RIB 40) (Yellow koji mold), this protein is mRNA 3'-end-processing protein rna14 (rna14).